A 147-amino-acid polypeptide reads, in one-letter code: Calmodulin (147 aa).

4 consecutive EF-hand domains span residues 8 to 43 (EQIAEFKEAFALFDKDNSGSISASELATVMRSLGLS), 44 to 79 (PSEAEVADLMNEIDVDGNHAIEFSEFLALMSRQLKC), 81 to 116 (DSEQELLEAFKVFDKNGDGLISAAELKHVLTSIGEK), and 120 to 147 (AEVDEMLREVSDGSGEINIKQFAALLSK). Residues D21, D23, S25, S27, E32, D57, D59, N61, E68, D94, N96, D98, and E105 each contribute to the Ca(2+) site.

It belongs to the calmodulin family.

Functionally, calmodulin mediates the control of a large number of enzymes, ion channels and other proteins by Ca(2+). Among the enzymes to be stimulated by the calmodulin-Ca(2+) complex are a number of protein kinases and phosphatases. The chain is Calmodulin (CMD1) from Kluyveromyces lactis (strain ATCC 8585 / CBS 2359 / DSM 70799 / NBRC 1267 / NRRL Y-1140 / WM37) (Yeast).